We begin with the raw amino-acid sequence, 165 residues long: Peptide methionine sulfoxide reductase MsrA (165 aa).

Cys11 is an active-site residue.

The protein belongs to the MsrA Met sulfoxide reductase family.

It catalyses the reaction L-methionyl-[protein] + [thioredoxin]-disulfide + H2O = L-methionyl-(S)-S-oxide-[protein] + [thioredoxin]-dithiol. The enzyme catalyses [thioredoxin]-disulfide + L-methionine + H2O = L-methionine (S)-S-oxide + [thioredoxin]-dithiol. Has an important function as a repair enzyme for proteins that have been inactivated by oxidation. Catalyzes the reversible oxidation-reduction of methionine sulfoxide in proteins to methionine. This chain is Peptide methionine sulfoxide reductase MsrA, found in Ureaplasma urealyticum serovar 10 (strain ATCC 33699 / Western).